Consider the following 246-residue polypeptide: Ubiquinone biosynthesis O-methyltransferase (246 aa).

S-adenosyl-L-methionine is bound by residues arginine 44, glycine 63, aspartate 84, and methionine 128.

Belongs to the methyltransferase superfamily. UbiG/COQ3 family.

The catalysed reaction is a 3-demethylubiquinol + S-adenosyl-L-methionine = a ubiquinol + S-adenosyl-L-homocysteine + H(+). It carries out the reaction a 3-(all-trans-polyprenyl)benzene-1,2-diol + S-adenosyl-L-methionine = a 2-methoxy-6-(all-trans-polyprenyl)phenol + S-adenosyl-L-homocysteine + H(+). It participates in cofactor biosynthesis; ubiquinone biosynthesis. Functionally, O-methyltransferase that catalyzes the 2 O-methylation steps in the ubiquinone biosynthetic pathway. The polypeptide is Ubiquinone biosynthesis O-methyltransferase (Xylella fastidiosa (strain Temecula1 / ATCC 700964)).